Reading from the N-terminus, the 101-residue chain is Putative pterin-4-alpha-carbinolamine dehydratase (101 aa).

This sequence belongs to the pterin-4-alpha-carbinolamine dehydratase family.

It carries out the reaction (4aS,6R)-4a-hydroxy-L-erythro-5,6,7,8-tetrahydrobiopterin = (6R)-L-erythro-6,7-dihydrobiopterin + H2O. This chain is Putative pterin-4-alpha-carbinolamine dehydratase, found in Nitrobacter hamburgensis (strain DSM 10229 / NCIMB 13809 / X14).